We begin with the raw amino-acid sequence, 162 residues long: Caveolin-2 (162 aa).

Residues 1 to 86 are Cytoplasmic-facing; sequence MGLETEKADV…FEVSKYVIYK (86 aa). Y19 carries the phosphotyrosine; by SRC modification. Residues S20, S23, and S36 each carry the phosphoserine modification. The helical intramembrane region spans 87–107; it reads FLTLLLAMPMAFAAGVLFATL. Over 108–162 the chain is Cytoplasmic; the sequence is SCLHIWIIMPFVKTCLMVLPSVQTIWKSVTDAVIAPLCSSVGRSFSSVSLQVSHD.

The protein belongs to the caveolin family. Monomer or homodimer. Interacts with CAV1; the interaction forms a stable heterooligomeric complex that is required for targeting to lipid rafts and for caveolae formation. Tyrosine phosphorylated forms do not form heterooligomers with the Tyr-19-phosphorylated form existing as a monomer or dimer. Interacts (tyrosine phosphorylated form) with the SH2 domain-containing proteins, RASA1, NCK1 and SRC. Interacts (tyrosine phosphorylated form) with INSR. Interacts (Tyr-19 phosphorylated form) with MAPK1 (phosphorylated form); the interaction, promoted by insulin, leads to nuclear location and MAPK1 activation. Interacts with STAT3; the interaction is increased on insulin-induced tyrosine phosphorylation leading to STAT activation. In terms of processing, phosphorylated on serine and tyrosine residues. CAV1 promotes phosphorylation on Ser-23 which then targets the complex to the plasma membrane, lipid rafts and caveolae. Phosphorylation on Ser-36 appears to modulate mitosis in endothelial cells. Phosphorylation on Tyr-19 is required for insulin-induced phosphorylation of MAPK1 and DNA binding of STAT3. Tyrosine phosphorylation is induced by both EGF and insulin.

Its subcellular location is the nucleus. It localises to the cytoplasm. The protein resides in the golgi apparatus membrane. It is found in the cell membrane. The protein localises to the membrane. Its subcellular location is the caveola. Its function is as follows. May act as a scaffolding protein within caveolar membranes. Interacts directly with G-protein alpha subunits and can functionally regulate their activity. Acts as an accessory protein in conjunction with CAV1 in targeting to lipid rafts and driving caveolae formation. The Ser-36 phosphorylated form has a role in modulating mitosis in endothelial cells. Positive regulator of cellular mitogenesis of the MAPK signaling pathway. Required for the insulin-stimulated nuclear translocation and activation of MAPK1 and STAT3, and the subsequent regulation of cell cycle progression. This Canis lupus familiaris (Dog) protein is Caveolin-2 (CAV2).